The primary structure comprises 181 residues: Ribose 1,5-bisphosphate phosphokinase PhnN (181 aa).

12-19 (GPSGAGKD) serves as a coordination point for ATP.

It belongs to the ribose 1,5-bisphosphokinase family.

It catalyses the reaction alpha-D-ribose 1,5-bisphosphate + ATP = 5-phospho-alpha-D-ribose 1-diphosphate + ADP. It functions in the pathway metabolic intermediate biosynthesis; 5-phospho-alpha-D-ribose 1-diphosphate biosynthesis; 5-phospho-alpha-D-ribose 1-diphosphate from D-ribose 5-phosphate (route II): step 3/3. Catalyzes the phosphorylation of ribose 1,5-bisphosphate to 5-phospho-D-ribosyl alpha-1-diphosphate (PRPP). This Acidiphilium cryptum (strain JF-5) protein is Ribose 1,5-bisphosphate phosphokinase PhnN.